Consider the following 204-residue polypeptide: Protein GrpE (204 aa).

The disordered stretch occupies residues 1-52; that stretch reads MSSKNNPESETKAKNKWEKVMEAEEEQEEGGGDGSQEMEPHREGLEFPSREK. Composition is skewed to basic and acidic residues over residues 7–22 and 38–52; these read PESE…KVME and MEPH…SREK.

The protein belongs to the GrpE family. In terms of assembly, homodimer.

Its subcellular location is the cytoplasm. Its function is as follows. Participates actively in the response to hyperosmotic and heat shock by preventing the aggregation of stress-denatured proteins, in association with DnaK and GrpE. It is the nucleotide exchange factor for DnaK and may function as a thermosensor. Unfolded proteins bind initially to DnaJ; upon interaction with the DnaJ-bound protein, DnaK hydrolyzes its bound ATP, resulting in the formation of a stable complex. GrpE releases ADP from DnaK; ATP binding to DnaK triggers the release of the substrate protein, thus completing the reaction cycle. Several rounds of ATP-dependent interactions between DnaJ, DnaK and GrpE are required for fully efficient folding. This Coxiella burnetii (strain Dugway 5J108-111) protein is Protein GrpE.